The following is a 160-amino-acid chain: Nucleotide-binding protein VF_1240 (160 aa).

Belongs to the YajQ family.

Nucleotide-binding protein. This is Nucleotide-binding protein VF_1240 from Aliivibrio fischeri (strain ATCC 700601 / ES114) (Vibrio fischeri).